Consider the following 508-residue polypeptide: Lysine--tRNA ligase (508 aa).

Mg(2+) contacts are provided by Glu418 and Glu425.

It belongs to the class-II aminoacyl-tRNA synthetase family. As to quaternary structure, homodimer. It depends on Mg(2+) as a cofactor.

It is found in the cytoplasm. It carries out the reaction tRNA(Lys) + L-lysine + ATP = L-lysyl-tRNA(Lys) + AMP + diphosphate. This is Lysine--tRNA ligase from Burkholderia mallei (strain NCTC 10247).